Reading from the N-terminus, the 140-residue chain is Probable glycine cleavage system H protein (140 aa).

One can recognise a Lipoyl-binding domain in the interval Arg22–Glu114. Lys63 is modified (N6-lipoyllysine).

This sequence belongs to the GcvH family. The glycine cleavage system is composed of four proteins: P, T, L and H. It depends on (R)-lipoate as a cofactor.

Its function is as follows. The glycine cleavage system catalyzes the degradation of glycine. The H protein shuttles the methylamine group of glycine from the P protein to the T protein. The polypeptide is Probable glycine cleavage system H protein (Korarchaeum cryptofilum (strain OPF8)).